We begin with the raw amino-acid sequence, 1170 residues long: MANGSDTKPVPKGPRGARADDTRTPPHPDRRGSDRDQYFSKDRSYGGRTDRDYSDYDRAYPPPRDYDRYGGGKYGKYDKYDKYDRYDRLDSHDYPPRRDRDYDRSRDARDTDSRDYGRLPPRDTRPPPRGGREYRYARDERGWDRDRRDLDRDRDRDPRDRERDARDRDRDRDFRDRDHDPRDRDPKGYRPHSLDPLPSRDRDMPPRERERELVRERDLFSRDRDLITGVRELARSPPPPLRDGRNRDRSNDRHDRSFDKHTRDRGTRDRDTKEKGSVISTPQTAPTPRLTPTNGKPDLPTSQPPAPPSPPRLKTFPKEVWETVGRKNNTRLTYDPELSKDKQKGKRGIYEEVKKGASTTEDPRSKHPHYFKTSSKSNKKPYQRLPVPRFLYDANSIAPPPSTQIIVKGLSSLTTSKTITAHFKTYGELEAVNMVEDPATGSSVGACLVRFKVTKNNYEAAHECLKKAIRGQKTGRIDQAKYRVEPDEDGAKAKDIIKRVAARAAKKAMPVKQPPTAPAADKSIMEKLPTPVPSARPSPKAAQLMKTSAYIFIAGKYLPSEKVFASDIRRILRDFGWFDVLKEGDGFYVFFDNNRDTVECYEAMNGRKVNGHQMAMAMIRLSRVAPKTKESEENATEQAPKLPPKEEARKLIVQELANSLRKDIRERVIAAAIVEFLNPARFTHIKQDPEPSAATEPNTVNASAARVDTPEPVQSSSAIPGFLPRFKIKRKGDPTKKKDATKKNRKKISARPMNHVLNDYYSDEEDSTRMSTPIVPDTSADAAELPIRKPRKKISQSKQRIMDFSSSEGSNESEEEEEVEDDMEEEEDETAQEELQEASTLDTSQQLTTAFGEILDWAPAHGFPQPVTADKKGGALTTISGFQALVKDDEDMELLQEALEGIEPEKINGEAWTWTHKHLNEAVAKENAEFPELAAPNAFVNSTGSWKSQGYFKIPEAAKSEYLPHRKKLNIPIDTLQMENREKKKENASNSRVNRANNRRLVADINMQKQLLSTETDVLNFNQLRKRKKPVKFARSAIHNWGLYAIEPIAANEMIIEYVGEVVRQEIADLREARYMRSGIGSSYLFRVDESTVVDATKRGGIARFINHCCTPSCTAKIIKVEGQKRIVIYASRDIAANEELTYDYKFEKEIGEERIPCLCGAPGCKGYLN.

The disordered stretch occupies residues 1–382 (MANGSDTKPV…TSSKSNKKPY (382 aa)). 3 stretches are compositionally biased toward basic and acidic residues: residues 17–188 (ARAD…DPKG), 198–226 (PSRD…DRDL), and 242–276 (RDGR…KEKG). Residues 278–294 (VISTPQTAPTPRLTPTN) show a composition bias toward polar residues. The segment covering 302–311 (SQPPAPPSPP) has biased composition (pro residues). Basic and acidic residues-rich tracts occupy residues 316-325 (FPKEVWETVG) and 337-365 (ELSK…DPRS). In terms of domain architecture, RRM spans 403–489 (TQIIVKGLSS…AKYRVEPDED (87 aa)). Disordered stretches follow at residues 625–646 (APKT…PPKE) and 687–843 (QDPE…TLDT). Residues 731-742 (KGDPTKKKDATK) are compositionally biased toward basic and acidic residues. Positions 811 to 836 (NESEEEEEVEDDMEEEEDETAQEELQ) are enriched in acidic residues. Residues 995 to 1000 (RANNRR) carry the RxxxRR motif motif. In terms of domain architecture, SET spans 1029–1146 (KPVKFARSAI…ANEELTYDYK (118 aa)). Residue Tyr-1145 coordinates S-adenosyl-L-methionine. The Post-SET domain occupies 1154–1170 (ERIPCLCGAPGCKGYLN).

Belongs to the class V-like SAM-binding methyltransferase superfamily. In terms of assembly, component of the Set1C/COMPASS complex.

The protein resides in the nucleus. The protein localises to the chromosome. The catalysed reaction is L-lysyl(4)-[histone H3] + 3 S-adenosyl-L-methionine = N(6),N(6),N(6)-trimethyl-L-lysyl(4)-[histone H3] + 3 S-adenosyl-L-homocysteine + 3 H(+). The enzyme catalyses N(6)-methyl-L-lysyl(4)-[histone H3] + S-adenosyl-L-methionine = N(6),N(6)-dimethyl-L-lysyl(4)-[histone H3] + S-adenosyl-L-homocysteine + H(+). It carries out the reaction N(6),N(6)-dimethyl-L-lysyl(4)-[histone H3] + S-adenosyl-L-methionine = N(6),N(6),N(6)-trimethyl-L-lysyl(4)-[histone H3] + S-adenosyl-L-homocysteine + H(+). Its function is as follows. Catalytic component of the COMPASS (Set1C) complex that specifically mono-, di- and trimethylates histone H3 to form H3K4me1/2/3. Binds RNAs which might negatively affect its histone methyltransferase activity. COMPASS recognizes ubiquitinated H2B on one face of the nucleosome which stimulates the methylation of H3 on the opposing face. The chain is Histone-lysine N-methyltransferase, H3 lysine-4 specific (SET1) from Yarrowia lipolytica (strain CLIB 122 / E 150) (Yeast).